The sequence spans 506 residues: 7,8-dihydro-6-hydroxymethylpterin dimethyltransferase (506 aa).

[4Fe-4S] cluster contacts are provided by Cys-73, Cys-77, Cys-80, Cys-98, Cys-102, and Cys-105. The Radical SAM core domain maps to 82 to 300 (NHKSTTILAN…FIKLVEEQTD (219 aa)).

It belongs to the radical SAM superfamily. [4Fe-4S] cluster serves as cofactor. S-adenosyl-L-methionine is required as a cofactor.

It participates in cofactor biosynthesis; 5,6,7,8-tetrahydromethanopterin biosynthesis. In terms of biological role, is responsible for the addition of methyl groups at C-7 and C-9 of the pterin ring during methanopterin (MPT) biosynthesis. Catalyzes methylation of 7,8-dihydro-6-hydroxymethylpterin, likely using methylenetetrahydromethanopterin as a methyl group donor, via a radical-based mechanism. The protein is 7,8-dihydro-6-hydroxymethylpterin dimethyltransferase of Methanocaldococcus jannaschii (strain ATCC 43067 / DSM 2661 / JAL-1 / JCM 10045 / NBRC 100440) (Methanococcus jannaschii).